Consider the following 82-residue polypeptide: Cytochrome b559 subunit alpha (82 aa).

A helical transmembrane segment spans residues 21–35 (VIHSVTIPSLFIAGW). Position 23 (H23) interacts with heme.

It belongs to the PsbE/PsbF family. As to quaternary structure, heterodimer of an alpha subunit and a beta subunit. PSII is composed of 1 copy each of membrane proteins PsbA, PsbB, PsbC, PsbD, PsbE, PsbF, PsbH, PsbI, PsbJ, PsbK, PsbL, PsbM, PsbT, PsbX, PsbY, PsbZ, Psb30/Ycf12, at least 3 peripheral proteins of the oxygen-evolving complex and a large number of cofactors. It forms dimeric complexes. Requires heme b as cofactor.

It localises to the plastid. The protein localises to the chloroplast thylakoid membrane. In terms of biological role, this b-type cytochrome is tightly associated with the reaction center of photosystem II (PSII). PSII is a light-driven water:plastoquinone oxidoreductase that uses light energy to abstract electrons from H(2)O, generating O(2) and a proton gradient subsequently used for ATP formation. It consists of a core antenna complex that captures photons, and an electron transfer chain that converts photonic excitation into a charge separation. In Ostreococcus tauri, this protein is Cytochrome b559 subunit alpha.